The sequence spans 272 residues: Sugar-phosphatase AraL (272 aa).

It belongs to the HAD-like hydrolase superfamily. The cofactor is Mg(2+).

The enzyme catalyses sugar phosphate + H2O = sugar + phosphate.. The catalysed reaction is O-phospho-L-serine + H2O = L-serine + phosphate. It carries out the reaction O-phospho-D-serine + H2O = D-serine + phosphate. Functionally, catalyzes the dephosphorylation of C5 and C6 carbon sugars in vitro. Catalyzes the dephosphorylation of 3'-AMP and phosphoserine in vitro. The protein is Sugar-phosphatase AraL (araL) of Bacillus subtilis (strain 168).